Here is a 211-residue protein sequence, read N- to C-terminus: tRNA (guanine-N(7)-)-methyltransferase (211 aa).

Residues E43, E68, D95, and D117 each contribute to the S-adenosyl-L-methionine site. D117 is a catalytic residue. Substrate contacts are provided by residues K121, D153, and 190–193 (TEYE).

The protein belongs to the class I-like SAM-binding methyltransferase superfamily. TrmB family.

The catalysed reaction is guanosine(46) in tRNA + S-adenosyl-L-methionine = N(7)-methylguanosine(46) in tRNA + S-adenosyl-L-homocysteine. The protein operates within tRNA modification; N(7)-methylguanine-tRNA biosynthesis. Functionally, catalyzes the formation of N(7)-methylguanine at position 46 (m7G46) in tRNA. The polypeptide is tRNA (guanine-N(7)-)-methyltransferase (Staphylococcus carnosus (strain TM300)).